We begin with the raw amino-acid sequence, 131 residues long: Small ribosomal subunit protein uS8 (131 aa).

This sequence belongs to the universal ribosomal protein uS8 family. Part of the 30S ribosomal subunit. Contacts proteins S5 and S12.

In terms of biological role, one of the primary rRNA binding proteins, it binds directly to 16S rRNA central domain where it helps coordinate assembly of the platform of the 30S subunit. In Clostridium novyi (strain NT), this protein is Small ribosomal subunit protein uS8.